Reading from the N-terminus, the 519-residue chain is tRNA pseudouridine synthase Pus10 (519 aa).

Residues 70–98 (NENEEIDENTKNNEDTENKADDKSQSNEE) form a disordered region. Basic and acidic residues predominate over residues 77 to 98 (ENTKNNEDTENKADDKSQSNEE). The region spanning 144-265 (NESEENESNI…NQKIYLQINP (122 aa)) is the THUMP domain. D334 serves as the catalytic Nucleophile. 2 residues coordinate substrate: Y398 and Y476.

It belongs to the pseudouridine synthase Pus10 family.

It catalyses the reaction uridine(54) in tRNA = pseudouridine(54) in tRNA. The enzyme catalyses uridine(55) in tRNA = pseudouridine(55) in tRNA. Responsible for synthesis of pseudouridine from uracil-54 and uracil-55 in the psi GC loop of transfer RNAs. This chain is tRNA pseudouridine synthase Pus10, found in Methanococcus voltae (strain ATCC BAA-1334 / A3).